Here is a 391-residue protein sequence, read N- to C-terminus: DNA replication and repair protein RecF (391 aa).

Glycine 30–threonine 37 contributes to the ATP binding site.

It belongs to the RecF family.

The protein localises to the cytoplasm. Functionally, the RecF protein is involved in DNA metabolism; it is required for DNA replication and normal SOS inducibility. RecF binds preferentially to single-stranded, linear DNA. It also seems to bind ATP. The polypeptide is DNA replication and repair protein RecF (Saccharopolyspora erythraea (strain ATCC 11635 / DSM 40517 / JCM 4748 / NBRC 13426 / NCIMB 8594 / NRRL 2338)).